Consider the following 104-residue polypeptide: Conantokin-P (104 aa).

A signal peptide spans 1–26 (MQLYTYLYLLVPLVTFHLILSTGTLA). Positions 27–80 (HGGTLTERRSTDTTALKPEPVLLQKSDARSTDDNDKDRLTQMKRILKKRGNKAR) are excised as a propeptide. The tract at residues 29–87 (GTLTERRSTDTTALKPEPVLLQKSDARSTDDNDKDRLTQMKRILKKRGNKARGEEEHSK) is disordered. Residues 52–66 (SDARSTDDNDKDRLT) are compositionally biased toward basic and acidic residues. Residues Glu83, Glu84, Glu90, Glu94, and Glu103 each carry the 4-carboxyglutamate modification. Glu90 and Glu94 together coordinate a divalent metal cation. An intrachain disulfide couples Cys91 to Cys104.

The protein belongs to the conotoxin B superfamily. As to expression, expressed by the venom duct.

It is found in the secreted. Its function is as follows. Conantokins inhibit N-methyl-D-aspartate (NMDA) receptors. This toxin has the highest potency for the NR2B/GRIN2B subunit, followed by NR2A/GRIN2A, NR2C/GRIN2C, and NR2D/GRIN2D subunits. The chain is Conantokin-P from Conus purpurascens (Purple cone).